The chain runs to 269 residues: Thymidylate synthase (269 aa).

DUMP is bound by residues Arg-21 and 125-126; that span reads RR. Cys-145 functions as the Nucleophile in the catalytic mechanism. DUMP-binding positions include 171–174, Asn-182, and 212–214; these read RSGD and HVY. Asp-174 serves as a coordination point for (6R)-5,10-methylene-5,6,7,8-tetrahydrofolate. Ala-268 lines the (6R)-5,10-methylene-5,6,7,8-tetrahydrofolate pocket.

This sequence belongs to the thymidylate synthase family. Bacterial-type ThyA subfamily. In terms of assembly, homodimer.

It is found in the cytoplasm. The catalysed reaction is dUMP + (6R)-5,10-methylene-5,6,7,8-tetrahydrofolate = 7,8-dihydrofolate + dTMP. The protein operates within pyrimidine metabolism; dTTP biosynthesis. Functionally, catalyzes the reductive methylation of 2'-deoxyuridine-5'-monophosphate (dUMP) to 2'-deoxythymidine-5'-monophosphate (dTMP) while utilizing 5,10-methylenetetrahydrofolate (mTHF) as the methyl donor and reductant in the reaction, yielding dihydrofolate (DHF) as a by-product. This enzymatic reaction provides an intracellular de novo source of dTMP, an essential precursor for DNA biosynthesis. This is Thymidylate synthase from Cutibacterium acnes (strain DSM 16379 / KPA171202) (Propionibacterium acnes).